A 117-amino-acid polypeptide reads, in one-letter code: Ribosome-binding factor A (117 aa).

Belongs to the RbfA family. As to quaternary structure, monomer. Binds 30S ribosomal subunits, but not 50S ribosomal subunits or 70S ribosomes.

The protein localises to the cytoplasm. Its function is as follows. One of several proteins that assist in the late maturation steps of the functional core of the 30S ribosomal subunit. Associates with free 30S ribosomal subunits (but not with 30S subunits that are part of 70S ribosomes or polysomes). Required for efficient processing of 16S rRNA. May interact with the 5'-terminal helix region of 16S rRNA. In Leptospira interrogans serogroup Icterohaemorrhagiae serovar Lai (strain 56601), this protein is Ribosome-binding factor A.